A 273-amino-acid polypeptide reads, in one-letter code: Hydroxyethylthiazole kinase (273 aa).

A substrate-binding site is contributed by Met47. Residues Arg123 and Thr172 each contribute to the ATP site. Gly199 contributes to the substrate binding site.

This sequence belongs to the Thz kinase family. Mg(2+) is required as a cofactor.

It carries out the reaction 5-(2-hydroxyethyl)-4-methylthiazole + ATP = 4-methyl-5-(2-phosphooxyethyl)-thiazole + ADP + H(+). It participates in cofactor biosynthesis; thiamine diphosphate biosynthesis; 4-methyl-5-(2-phosphoethyl)-thiazole from 5-(2-hydroxyethyl)-4-methylthiazole: step 1/1. Functionally, catalyzes the phosphorylation of the hydroxyl group of 4-methyl-5-beta-hydroxyethylthiazole (THZ). The polypeptide is Hydroxyethylthiazole kinase (Ruminiclostridium cellulolyticum (strain ATCC 35319 / DSM 5812 / JCM 6584 / H10) (Clostridium cellulolyticum)).